A 205-amino-acid polypeptide reads, in one-letter code: Ferritin heavy chain (205 aa).

A signal peptide spans 1–19 (MVKLIASLLLLAVVAQAYG). Residues 35–190 (VDMKDACIKG…GKLTTLKKMM (156 aa)) enclose the Ferritin-like diiron domain. A disulfide bridge connects residues Cys-41 and Cys-150. Residues Glu-52, Glu-87, His-90, Glu-136, and Gln-172 each contribute to the Fe cation site.

The protein belongs to the ferritin family. Oligomer of 12 light (L) chains and 12 heavy (H) chains; L and H chains are disulfide-linked. The functional molecule forms a roughly spherical shell with a diameter of 12 nm and contains a central cavity into which the insoluble ferric iron core is deposited. In terms of tissue distribution, expressed in hemolymph and gut (at protein level). Expressed in the head (at protein level). Expressed in thorax and abdomen.

It localises to the golgi apparatus. It is found in the secreted. The catalysed reaction is 4 Fe(2+) + O2 + 4 H(+) = 4 Fe(3+) + 2 H2O. Stores iron in a soluble, non-toxic, readily available form. Important for iron homeostasis. Iron is taken up in the ferrous form and deposited as ferric hydroxides after oxidation. Ferritin is composed of a heavy (H) chain which is responsible for the oxidation and uptake of ferrous iron, and a light (L) chain which facilitates the nucleation of the ferrihydrite iron core. Required for dietary iron absorption in the midgut. Involved in tissue iron detoxification by exporting excess iron. Functions as an antioxidant and protects the developing organs from cell-mediated ferroptosis. Required for embryo and larval development. Plays a role in blood cell (haemocyte) differentiation in the lymph gland at the larval stage. May also store Zn(2+) and Mn(2+) and thus may play a role in zinc and manganese homeostasis. This Drosophila melanogaster (Fruit fly) protein is Ferritin heavy chain.